We begin with the raw amino-acid sequence, 364 residues long: Fructose-bisphosphate aldolase A (364 aa).

At threonine 9 the chain carries Phosphothreonine. Phosphoserine is present on residues serine 36 and serine 39. Lysine 42 bears the N6-acetyllysine; alternate mark. Lysine 42 participates in a covalent cross-link: Glycyl lysine isopeptide (Lys-Gly) (interchain with G-Cter in SUMO1); alternate. A Glycyl lysine isopeptide (Lys-Gly) (interchain with G-Cter in SUMO2); alternate cross-link involves residue lysine 42. Arginine 43 contributes to the beta-D-fructose 1,6-bisphosphate binding site. Position 46 is a phosphoserine (serine 46). Lysine 99 carries the N6-(2-hydroxyisobutyryl)lysine modification. Position 108 is an N6-acetyllysine (lysine 108). An N6-acetyllysine; alternate modification is found at lysine 111. The residue at position 111 (lysine 111) is an N6-malonyllysine; alternate. Serine 132 is subject to Phosphoserine. Lysine 147 carries the post-translational modification N6-(2-hydroxyisobutyryl)lysine. Residue glutamate 188 is the Proton acceptor of the active site. Lysine 230 serves as the catalytic Schiff-base intermediate with dihydroxyacetone-P. Residue serine 272 is modified to Phosphoserine. Beta-D-fructose 1,6-bisphosphate contacts are provided by residues 272–274, serine 301, and arginine 304; that span reads SGG. N6-malonyllysine is present on lysine 312. Position 330 is an N6-acetyllysine (lysine 330). Asparagine 361 carries the deamidated asparagine; in form beta modification.

It belongs to the class I fructose-bisphosphate aldolase family. As to quaternary structure, homotetramer. Interacts with SNX9 and WAS. Interacts with FBP2; the interaction blocks FBP2 inhibition by physiological concentrations of AMP and reduces inhibition by Ca(2+). Post-translationally, asn-361 in form alpha is deaminated to Asp in form beta.

It localises to the cytoplasm. The protein resides in the myofibril. Its subcellular location is the sarcomere. The protein localises to the i band. It is found in the m line. It carries out the reaction beta-D-fructose 1,6-bisphosphate = D-glyceraldehyde 3-phosphate + dihydroxyacetone phosphate. It participates in carbohydrate degradation; glycolysis; D-glyceraldehyde 3-phosphate and glycerone phosphate from D-glucose: step 4/4. In terms of biological role, plays a key role in glycolysis and gluconeogenesis. In addition, may also function as scaffolding protein. This is Fructose-bisphosphate aldolase A (ALDOA) from Oryctolagus cuniculus (Rabbit).